A 701-amino-acid chain; its full sequence is Sodium/hydrogen exchanger 6 (701 aa).

2 helical membrane passes run 71 to 91 and 103 to 123; these read SANL…IWLF and GLAM…IHVP. N128 carries N-linked (GlcNAc...) asparagine glycosylation. 8 helical membrane-spanning segments follow: residues 176–196, 211–231, 252–272, 278–298, 324–344, 372–392, 414–434, and 436–456; these read VTFD…FYAG, ILAY…SIMY, CLLF…AIFH, VELY…AIVL, IGIF…TGVV, TFLL…FCGI, FELL…LTLF, and FQNH…IFLG. K475 participates in a covalent cross-link: Glycyl lysine isopeptide (Lys-Gly) (interchain with G-Cter in ubiquitin). The next 2 membrane-spanning stretches (helical) occupy residues 479 to 499 and 515 to 535; these read NFQH…ALAI and LLIV…MLSC.

This sequence belongs to the monovalent cation:proton antiporter 1 (CPA1) transporter (TC 2.A.36) family. Homodimer. Interacts with RACK1; regulates the distribution of SLC9A6 between endosomes and the plasma membrane. Post-translationally, ubiquitinated (in vitro). Glycosylated. Ubiquitous. High expression in brain, skeletal muscle, and heart, but is also detected at lower levels in most other tissues.

The protein resides in the endosome membrane. The protein localises to the recycling endosome membrane. Its subcellular location is the early endosome membrane. It is found in the late endosome membrane. It localises to the cell membrane. The enzyme catalyses Na(+)(in) + H(+)(out) = Na(+)(out) + H(+)(in). It catalyses the reaction K(+)(in) + H(+)(out) = K(+)(out) + H(+)(in). Its function is as follows. Endosomal Na(+), K(+)/H(+) antiporter. Mediates the electroneutral exchange of endosomal luminal H(+) for a cytosolic Na(+) or K(+). By facilitating proton efflux, SLC9A6 counteracts the acidity generated by vacuolar (V)-ATPase, thereby limiting luminal acidification. Responsible for alkalizing and maintaining the endosomal pH, and consequently in, e.g., endosome maturation and trafficking of recycling endosomal cargo. Plays a critical role during neurodevelopment by regulating synaptic development and plasticity. Implicated in the maintenance of cell polarity in a manner that is dependent on its ability to modulate intravesicular pH. Regulates intracelular pH in some specialized cells, osteoclasts and stereocilia where this transporter localizes to the plasma membrane. This Homo sapiens (Human) protein is Sodium/hydrogen exchanger 6.